The chain runs to 681 residues: Leucine-rich repeat, immunoglobulin-like domain and transmembrane domain-containing protein 3 (681 aa).

An N-terminal signal peptide occupies residues Met-1–Gly-19. An N-linked (GlcNAc...) asparagine glycan is attached at Asn-18. The Lumenal segment spans residues Thr-20–Ser-584. LRR repeat units lie at residues Pro-56–Tyr-79, Leu-80–Asn-103, Leu-104–Met-128, Pro-129–Tyr-151, and Leu-152–Ser-175. An Ig-like domain is found at Pro-254–Thr-344. Cysteines 275 and 328 form a disulfide. Asn-296 is a glycosylation site (N-linked (GlcNAc...) asparagine). Disordered stretches follow at residues Thr-350–Ser-391 and Thr-425–Pro-464. A compositionally biased stretch (polar residues) spans Thr-378–Ser-391. 2 N-linked (GlcNAc...) asparagine glycosylation sites follow: Asn-485 and Asn-506. The chain crosses the membrane as a helical span at residues Leu-585–Leu-605. Over Tyr-606–Gly-681 the chain is Cytoplasmic.

As to expression, detected in the outer plexiform layer (OPL) of the retina, where it localizes to rod and cone ON-bipolar cells (at protein level). Also detected in bipolar cell bodies in the inner retinal layer (INL) (at protein level).

The protein localises to the cell projection. It is found in the dendrite. The protein resides in the perikaryon. Its subcellular location is the endoplasmic reticulum membrane. Plays a role in the synapse formation and synaptic transmission between cone photoreceptor cells and retinal bipolar cells. Required for normal transmission of a light-evoked stimulus from the cone photoreceptor cells to the ON-bipolar cells and ON-ganglion cells in the inner retina. Required in retinal ON-bipolar cells for normal localization of the cation channel TRPM1 at dendrite tips. Seems to play a specific role in synaptic contacts made by ON-bipolar cells with cone photoreceptor pedicles. May also have a role in cone synapse formation. Might facilitate FGFR1 exit from the endoplasmic reticulum to the Golgi. Could be a regulator of the FGFRs. This chain is Leucine-rich repeat, immunoglobulin-like domain and transmembrane domain-containing protein 3, found in Mus musculus (Mouse).